A 745-amino-acid chain; its full sequence is Protein PHOX1 (745 aa).

Residues 1 to 10 (MGKPTGKKKN) show a composition bias toward basic residues. The interval 1–37 (MGKPTGKKKNNNYTEMPPTESSTTGGGKTGKSFDRSA) is disordered. 3 TPR repeats span residues 52-85 (ALELKEEGNKLFQKRDYEGAMFRYDKAVKLLPRD), 90-125 (AYLRTSMASCYMQMGLGEYPNAINECNLALEASPRF), and 126-159 (SKALLKRARCYEALNKLDFAFRDSRVVLNMEPEN). Residues 280–359 (TRTVKLVHGD…GSFRLYIAEV (80 aa)) form the PB1 domain. TPR repeat units lie at residues 406-441 (EHWIFQFAQLFKNHVGFDSDSYLELHNLGMKLYTEA), 443-472 (EDIVTGEDAQELFDIAADKFQEMAALAMFN), 494-528 (ETILEKVEAGFEWAKNEYNKAAEKYEGAVKIKSDF), and 553-586 (GEVDIESDASQDVLKLYNKAEESMEKGMQIWEEM).

In terms of assembly, interacts with myosin XI-1 and XI-K.

Its subcellular location is the cytoplasmic vesicle membrane. Functionally, carboxylate clamp type tetratricopeptide repeat protein that may act as a potential Hsp90/Hsp70 co-chaperone. Contributes to polar growth of root hairs. This chain is Protein PHOX1, found in Arabidopsis thaliana (Mouse-ear cress).